The sequence spans 171 residues: Probable deoxyuridine 5'-triphosphate nucleotidohydrolase (171 aa).

The protein belongs to the dCTP deaminase family. Archaeal dUTPase subfamily.

It carries out the reaction dUTP + H2O = dUMP + diphosphate + H(+). It functions in the pathway pyrimidine metabolism; dUMP biosynthesis; dUMP from dCTP (dUTP route): step 2/2. This enzyme is involved in nucleotide metabolism: it produces dUMP, the immediate precursor of thymidine nucleotides and it decreases the intracellular concentration of dUTP so that uracil cannot be incorporated into DNA. This chain is Probable deoxyuridine 5'-triphosphate nucleotidohydrolase, found in Methanosarcina mazei (strain ATCC BAA-159 / DSM 3647 / Goe1 / Go1 / JCM 11833 / OCM 88) (Methanosarcina frisia).